A 471-amino-acid polypeptide reads, in one-letter code: Probable lysophospholipase BODYGUARD 2 (471 aa).

An N-terminal signal peptide occupies residues Met1–Tyr45. A lipid anchor (N-palmitoyl cysteine) is attached at Cys46. The 104-residue stretch at Val193 to Pro296 folds into the AB hydrolase-1 domain. His197 is an active-site residue. The active-site Nucleophile is the Ser271. Residues Asp418 and His446 each act as charge relay system in the active site.

The protein localises to the cell membrane. It is found in the secreted. It localises to the cell wall. Involved in cuticle development and morphogenesis. The protein is Probable lysophospholipase BODYGUARD 2 of Arabidopsis thaliana (Mouse-ear cress).